Consider the following 187-residue polypeptide: Adenylate kinase 1 (187 aa).

G14 to T19 provides a ligand contact to ATP. The interval S34–V63 is NMP. AMP is bound by residues T35, R40, E61–V63, G89–R92, and Q96. Positions A130–D136 are LID. Position 131 (R131) interacts with ATP. Positions 133 and 144 each coordinate AMP. Position 172 (Q172) interacts with ATP.

Belongs to the adenylate kinase family. In terms of assembly, monomer.

The protein localises to the cytoplasm. The catalysed reaction is AMP + ATP = 2 ADP. It functions in the pathway purine metabolism; AMP biosynthesis via salvage pathway; AMP from ADP: step 1/1. Its function is as follows. Catalyzes the reversible transfer of the terminal phosphate group between ATP and AMP. Plays an important role in cellular energy homeostasis and in adenine nucleotide metabolism. This is Adenylate kinase 1 from Synechocystis sp. (strain ATCC 27184 / PCC 6803 / Kazusa).